Reading from the N-terminus, the 120-residue chain is MITKADKNAVRKKRHARVRRTITGTAARPRLNVFRSSKHIYVQLIDDAAQTTLVSASSKDKALDLTNGGNVEAAKAVGKLAAERALEKGIDTVVFDRGGYLYHGRVKAVAEAAREAGLKF.

It belongs to the universal ribosomal protein uL18 family. As to quaternary structure, part of the 50S ribosomal subunit; part of the 5S rRNA/L5/L18/L25 subcomplex. Contacts the 5S and 23S rRNAs.

This is one of the proteins that bind and probably mediate the attachment of the 5S RNA into the large ribosomal subunit, where it forms part of the central protuberance. The chain is Large ribosomal subunit protein uL18 from Exiguobacterium sp. (strain ATCC BAA-1283 / AT1b).